The following is a 542-amino-acid chain: Cryptochrome-1 (542 aa).

The Photolyase/cryptochrome alpha/beta domain occupies 5–140; the sequence is GANVIWFRHG…DFVEKVSHTL (136 aa). FAD contacts are provided by residues Arg237, Ser265, Ser267, Gln311, His378, 410-412, Cys416, and Asn419; that span reads DAD.

Belongs to the DNA photolyase class-1 family. As to quaternary structure, interacts with tim and per; promoted by light conditions. Interaction with tim irreversibly commits tim to proteasomal degradation. Interacts with l(1)G0136/CG8198. FAD serves as cofactor. As to expression, expressed at higher levels in the head than in body and it is more expressed in antennae than in legs, wings and mouth appendages. Prominent expression is seen in cells of the lateral brain, which are close to or coincident with the clock neurons. Abundance oscillates in a circadian manner.

It localises to the cytoplasm. The protein localises to the perinuclear region. It is found in the nucleus. Blue light-dependent regulator that is the input of the circadian feedback loop. Has no photolyase activity for cyclobutane pyrimidine dimers or 6-4 photoproducts. Regulation of expression by light suggests a role in photoreception for locomotor activity rhythms. Functions, together with per, as a transcriptional repressor required for the oscillation of peripheral circadian clocks and for the correct specification of clock cells. Genes directly activated by the transcription factors Clock (Clk) and cycle (cyc) are repressed by cry. Necessary for light-dependent magnetosensitivity, an intact circadian system is not required for the magnetoreception mechanism to operate. Required for both the naive and trained responses to magnetic field, consistent with the notion that cry is in the input pathway of magnetic sensing. This Drosophila melanogaster (Fruit fly) protein is Cryptochrome-1.